Consider the following 367-residue polypeptide: Cyclin-D5-1 (367 aa).

A disordered region spans residues 307–333 (QPTSPASKSTTTTTGKRSSSSSCSEST).

This sequence belongs to the cyclin family. Cyclin D subfamily.

The protein is Cyclin-D5-1 (CYCD5-1) of Oryza sativa subsp. japonica (Rice).